We begin with the raw amino-acid sequence, 151 residues long: Large ribosomal subunit protein uL30 (151 aa).

This sequence belongs to the universal ribosomal protein uL30 family. As to quaternary structure, part of the 50S ribosomal subunit.

In Methanothrix thermoacetophila (strain DSM 6194 / JCM 14653 / NBRC 101360 / PT) (Methanosaeta thermophila), this protein is Large ribosomal subunit protein uL30.